A 39-amino-acid chain; its full sequence is Photosystem II reaction center protein Y (39 aa).

The helical transmembrane segment at 4 to 22 (TLVVFAPIIAALAWVIFNI) threads the bilayer.

Belongs to the PsbY family. PSII is composed of 1 copy each of membrane proteins PsbA, PsbB, PsbC, PsbD, PsbE, PsbF, PsbH, PsbI, PsbJ, PsbK, PsbL, PsbM, PsbT, PsbX, PsbY, Psb30/Ycf12, peripheral proteins PsbO, CyanoQ (PsbQ), PsbU, PsbV and a large number of cofactors. It forms dimeric complexes.

It localises to the cellular thylakoid membrane. Functionally, loosely associated component of the core of photosystem II (PSII), it is not always seen in crystals. PSII is a light-driven water plastoquinone oxidoreductase, using light energy to abstract electrons from H(2)O, generating a proton gradient subsequently used for ATP formation. The polypeptide is Photosystem II reaction center protein Y (Prochlorococcus marinus (strain MIT 9515)).